Consider the following 364-residue polypeptide: Ribosomal RNA large subunit methyltransferase M (364 aa).

S-adenosyl-L-methionine contacts are provided by residues serine 187, 220–223 (CPGG), aspartate 239, aspartate 259, and aspartate 276. The active-site Proton acceptor is lysine 305.

The protein belongs to the class I-like SAM-binding methyltransferase superfamily. RNA methyltransferase RlmE family. RlmM subfamily. Monomer.

Its subcellular location is the cytoplasm. It carries out the reaction cytidine(2498) in 23S rRNA + S-adenosyl-L-methionine = 2'-O-methylcytidine(2498) in 23S rRNA + S-adenosyl-L-homocysteine + H(+). In terms of biological role, catalyzes the 2'-O-methylation at nucleotide C2498 in 23S rRNA. The polypeptide is Ribosomal RNA large subunit methyltransferase M (Aeromonas salmonicida (strain A449)).